The chain runs to 561 residues: Arginine--tRNA ligase (561 aa).

The 'HIGH' region signature appears at 129–139; it reads ANPTGPLHVGH.

This sequence belongs to the class-I aminoacyl-tRNA synthetase family. Monomer.

The protein resides in the cytoplasm. The catalysed reaction is tRNA(Arg) + L-arginine + ATP = L-arginyl-tRNA(Arg) + AMP + diphosphate. The polypeptide is Arginine--tRNA ligase (Bordetella bronchiseptica (strain ATCC BAA-588 / NCTC 13252 / RB50) (Alcaligenes bronchisepticus)).